Consider the following 301-residue polypeptide: GTPase Era (301 aa).

In terms of domain architecture, Era-type G spans 4 to 173 (KAGFVALIGK…LECISEHLSP (170 aa)). Residues 12-19 (GKPNAGKS) are G1. Residue 12 to 19 (GKPNAGKS) participates in GTP binding. The G2 stretch occupies residues 38-42 (NATRK). Residues 64-67 (DTPG) form a G3 region. Residues 64–68 (DTPGL) and 122–125 (SKID) each bind GTP. Residues 122 to 125 (SKID) form a G4 region. Positions 152–154 (LSA) are G5. The 77-residue stretch at 204–280 (LSDEIPYESD…FLNLQVIAQK (77 aa)) folds into the KH type-2 domain.

Belongs to the TRAFAC class TrmE-Era-EngA-EngB-Septin-like GTPase superfamily. Era GTPase family. In terms of assembly, monomer.

It localises to the cytoplasm. The protein resides in the cell inner membrane. Functionally, an essential GTPase that binds both GDP and GTP, with rapid nucleotide exchange. Plays a role in 16S rRNA processing and 30S ribosomal subunit biogenesis and possibly also in cell cycle regulation and energy metabolism. The chain is GTPase Era from Helicobacter acinonychis (strain Sheeba).